Consider the following 273-residue polypeptide: Glutamate racemase (273 aa).

Substrate contacts are provided by residues 11 to 12 (DS) and 43 to 44 (YG). Cysteine 74 functions as the Proton donor/acceptor in the catalytic mechanism. 75–76 (NT) is a binding site for substrate. Cysteine 185 serves as the catalytic Proton donor/acceptor. 186–187 (TH) contacts substrate.

The protein belongs to the aspartate/glutamate racemases family.

The enzyme catalyses L-glutamate = D-glutamate. The protein operates within cell wall biogenesis; peptidoglycan biosynthesis. In terms of biological role, provides the (R)-glutamate required for cell wall biosynthesis. The protein is Glutamate racemase of Lactiplantibacillus plantarum (strain ATCC BAA-793 / NCIMB 8826 / WCFS1) (Lactobacillus plantarum).